Here is a 210-residue protein sequence, read N- to C-terminus: MSAKSAISKEIFAPLDERMLGAVQVKRRTKKKIPFLATGGQGEYLTYICLSVTNKKPTQASITKVKQFEGSTSFVRRSQWMLEQLRQVNGIDPNGDSAEFDLLFENAFDQWVASTASEKCTFFQILHHTCQRYLTDRKPEFINCQSKIMGGNSILHSAADSVTSAVQKASQALNERGERLGRAEEKTEDLKNSAQQFAETAHKLAMKHKC.

Serine 2 is modified (N-acetylserine). The v-SNARE coiled-coil homology domain maps to 151-210; that stretch reads GNSILHSAADSVTSAVQKASQALNERGERLGRAEEKTEDLKNSAQQFAETAHKLAMKHKC.

As to quaternary structure, part of a ternary complex containing SNAP25 and STX1A that can be dissociated by NAPA and NSF. Interacts with STX4A. As to expression, detected at low levels in brain, and at very low levels in heart, adrenal gland, testis, liver and kidney.

Its subcellular location is the cytoplasm. The protein resides in the membrane. In terms of biological role, forms non-fusogenic complexes with SNAP25 and STX1A and may thereby modulate the formation of functional SNARE complexes and exocytosis. This is Syntaxin-binding protein 6 (STXBP6) from Homo sapiens (Human).